Here is a 91-residue protein sequence, read N- to C-terminus: UPF0298 protein OB1449 (91 aa).

Belongs to the UPF0298 family.

The protein resides in the cytoplasm. The chain is UPF0298 protein OB1449 from Oceanobacillus iheyensis (strain DSM 14371 / CIP 107618 / JCM 11309 / KCTC 3954 / HTE831).